We begin with the raw amino-acid sequence, 689 residues long: DNA polymerase epsilon subunit B (689 aa).

Basic and acidic residues predominate over residues 98 to 115; sequence EWSHEHPIQHEENILGRT. The interval 98-155 is disordered; the sequence is EWSHEHPIQHEENILGRTDDDENNSDDEMPIAADSSLQNVSLSSPMRQPTERDEYKQP. A compositionally biased stretch (acidic residues) spans 116-126; the sequence is DDDENNSDDEM. The residue at position 122 (Ser-122) is a Phosphoserine. The segment covering 132–144 has biased composition (polar residues); that stretch reads SSLQNVSLSSPMR. At Ser-141 the chain carries Phosphoserine; by CDC28. Basic and acidic residues predominate over residues 146–155; that stretch reads PTERDEYKQP. Ser-613 carries the post-translational modification Phosphoserine.

Belongs to the DNA polymerase epsilon subunit B family. In terms of assembly, DNA polymerase epsilon is a heterotetramer consisting of POL2, DPB2, DPB3 and DPB4. In terms of processing, phosphorylated in a cell cycle dependent manner during late G1 phase. Phosphorylation may facilitate the interaction with POL2 or the activity of DNA polymerase II. Phosphorylation is independent of DNA replication but dependent upon CDC28 in vivo. Both Ser-141 and Ser-613 are phosphorylated in vivo, but in vitro only Ser-141 is phosphorylated by CDC28.

The protein localises to the cytoplasm. It localises to the nucleus. In terms of biological role, as accessory component of the DNA polymerase epsilon complex participates in chromosomal DNA replication. It is required during synthesis of the leading and lagging DNA strands at the replication fork and binds at/or near replication origins and moves along DNA with the replication fork. It has 3'-5' proofreading exonuclease activity that correct errors arising during DNA replication. It is also involved in DNA synthesis during DNA repair. In Saccharomyces cerevisiae (strain ATCC 204508 / S288c) (Baker's yeast), this protein is DNA polymerase epsilon subunit B (DPB2).